The following is a 637-amino-acid chain: Probable potassium transport system protein Kup (637 aa).

12 consecutive transmembrane segments (helical) span residues 25 to 45 (ISLA…LYAI), 62 to 82 (VLGV…LKYL), 115 to 135 (WFLV…GMIT), 149 to 169 (IIAP…LTGL), 180 to 200 (VGAL…VLGL), 227 to 247 (LQGF…EALY), 263 to 283 (ILFV…LLLF), 295 to 315 (LVPS…TIIA), 352 to 372 (IYVP…VIGF), 378 to 398 (LAAA…ILFY), 410 to 430 (LATN…FGAS), and 434 to 454 (LFHG…LMLT).

This sequence belongs to the HAK/KUP transporter (TC 2.A.72) family.

It localises to the cell inner membrane. It catalyses the reaction K(+)(in) + H(+)(in) = K(+)(out) + H(+)(out). In terms of biological role, transport of potassium into the cell. Likely operates as a K(+):H(+) symporter. This chain is Probable potassium transport system protein Kup, found in Chlorobium phaeobacteroides (strain DSM 266 / SMG 266 / 2430).